Here is an 874-residue protein sequence, read N- to C-terminus: Eukaryotic translation initiation factor 3 subunit C (874 aa).

The segment at 1–70 is disordered; the sequence is MSRFFVSGYT…DGRPSGPAYF (70 aa). The span at 14–61 shows a compositional bias: acidic residues; sequence SSEEEDLLSTSEEELLSSSDEGEDNESDSSFFGEDDDESEESSSDDED. The PCI domain occupies 598–774; the sequence is FHQHINLELL…KFISFTSTTE (177 aa). The disordered stretch occupies residues 797–874; it reads KNEKTQSNGY…SNNDEFQATA (78 aa). Over residues 813 to 848 the composition is skewed to low complexity; sequence KDQQNQQQQNQNQNQQQQQNQQQQQQQQSSQQQSNN. Residues 862 to 874 are compositionally biased toward polar residues; the sequence is NVNSNNDEFQATA.

The protein belongs to the eIF-3 subunit C family. In terms of assembly, component of the eukaryotic translation initiation factor 3 (eIF-3) complex.

The protein resides in the cytoplasm. Functionally, component of the eukaryotic translation initiation factor 3 (eIF-3) complex, which is involved in protein synthesis of a specialized repertoire of mRNAs and, together with other initiation factors, stimulates binding of mRNA and methionyl-tRNAi to the 40S ribosome. The eIF-3 complex specifically targets and initiates translation of a subset of mRNAs involved in cell proliferation. In Candida albicans (strain SC5314 / ATCC MYA-2876) (Yeast), this protein is Eukaryotic translation initiation factor 3 subunit C.